Here is a 416-residue protein sequence, read N- to C-terminus: Glutamyl-tRNA reductase (416 aa).

Residues Thr51 to Arg54, Ser110, Glu115 to Gln117, and Gln121 each bind substrate. The Nucleophile role is filled by Cys52. Gly190–Gly195 is an NADP(+) binding site.

This sequence belongs to the glutamyl-tRNA reductase family. Homodimer.

The catalysed reaction is (S)-4-amino-5-oxopentanoate + tRNA(Glu) + NADP(+) = L-glutamyl-tRNA(Glu) + NADPH + H(+). It participates in porphyrin-containing compound metabolism; protoporphyrin-IX biosynthesis; 5-aminolevulinate from L-glutamyl-tRNA(Glu): step 1/2. Functionally, catalyzes the NADPH-dependent reduction of glutamyl-tRNA(Glu) to glutamate 1-semialdehyde (GSA). This is Glutamyl-tRNA reductase from Francisella tularensis subsp. tularensis (strain FSC 198).